Reading from the N-terminus, the 261-residue chain is Zinc import ATP-binding protein ZnuC (261 aa).

One can recognise an ABC transporter domain in the interval 6-227; that stretch reads IQLNNIHLRF…PEYLKLFGKQ (222 aa). ATP is bound at residue 38–45; sequence GPNGAGKS.

It belongs to the ABC transporter superfamily. Zinc importer (TC 3.A.1.15.5) family. In terms of assembly, the complex is composed of two ATP-binding proteins (ZnuC), two transmembrane proteins (ZnuB) and a solute-binding protein (ZnuA).

It localises to the cell inner membrane. The enzyme catalyses Zn(2+)(out) + ATP(in) + H2O(in) = Zn(2+)(in) + ADP(in) + phosphate(in) + H(+)(in). Part of the ABC transporter complex ZnuABC involved in zinc import. Responsible for energy coupling to the transport system. This Saccharophagus degradans (strain 2-40 / ATCC 43961 / DSM 17024) protein is Zinc import ATP-binding protein ZnuC.